Consider the following 89-residue polypeptide: RLLDDTPEVKVLGAVADAIETPKAEPCIDLDVAGEATFAREDDLPDYVLYAEVTFHEICRDGGSESEGKNGSQMRLIADVGPESATVAK.

A disulfide bridge links C27 with C59. Residues 61–89 form a disordered region; sequence DGGSESEGKNGSQMRLIADVGPESATVAK.

Its function is as follows. Tuberculin is the soluble, proteinaceous cell substance of the bacterium, to which infected animals become hypersensitive and react characteristically to dermal injections. The sequence is that of Tuberculin-active protein from Mycobacterium tuberculosis.